Reading from the N-terminus, the 867-residue chain is MALVFSALLLLGLCGKISSEGQPAFHNTPGAMNYELPTTKYETQDTFNAGIVGPLYKMVHIFLSVVQPNDFPLDLIKKLIQNKKFDISVDSKEPEIIVLALKIALYEIGVLICAILGLLFIILMPLVGCFFCMCRCCNKCGGEMHQRQKQNAPCRRKCLGLSLLVICLLMSLGIIYGFVANQQTRTRIKGTQKLAKSNFRDFQTLLTETPKQIDYVVEQYTNTKNKAFSDLDGIGSVLGGRIKDQLKPKVTPVLEEIKAMATAIKQTKDALQNMSSSLKSLQDAATQLNTNLSSVRNSIENSLSSSDCTSDPASKICDSIRPSLSSLGSSLNSSQLPSVDRELNTVTEVDKTDLESLVKRGYTTIDEIPNTIQNQTVDVIKDVKNTLDSISSNIKDMSQSIPIEDMLLQVSHYLNNSNRYLNQELPKLEEYDSYWWLGGLIVCFLLTLIVTFFFLGLLCGVFGYDKHATPTRRGCVSNTGGIFLMAGVGFGFLFCWILMILVVLTFVVGANVEKLLCEPYENKKLLQVLDTPYLLKEQWQFYLSGMLFNNPDINMTFEQVYRDCKRGRGIYAAFQLENVVNVSDHFNIDQISENINTELENLNVNIDSIELLDNTGRKSLEDFAHSGIDTIDYSTYLKETEKSPTEVNLLTFASTLEAKANQLPEGKPKQAFLLDVQNIRAIHQHLLPPVQQSLNTLRQSVWTLQQTSNKLPEKVKKILASLDSVQHFLTNNVSLIVIGETKKFGKTILGYFEHYLHWVFYAITEKMTSCKPMATAMDSAVNGILCGYVADPLNLFWFGIGKATVLLLPAVIIAIKLAKYYRRMDSEDVYDDVETVPMKNLEIGSNGYHKDHLYGVHNPVMTSPSRY.

Residues 1 to 19 form the signal peptide; sequence MALVFSALLLLGLCGKISS. Residues 20 to 107 lie on the Extracellular side of the membrane; the sequence is EGQPAFHNTP…VLALKIALYE (88 aa). A helical membrane pass occupies residues 108 to 128; it reads IGVLICAILGLLFIILMPLVG. Topologically, residues 129-158 are cytoplasmic; sequence CFFCMCRCCNKCGGEMHQRQKQNAPCRRKC. Residues 159-179 traverse the membrane as a helical segment; that stretch reads LGLSLLVICLLMSLGIIYGFV. Residues 180-434 lie on the Extracellular side of the membrane; it reads ANQQTRTRIK…LPKLEEYDSY (255 aa). Residues lysine 226, lysine 258, and lysine 265 each carry the N6-acetyllysine modification. N-linked (GlcNAc...) asparagine glycosylation is found at asparagine 273, asparagine 291, asparagine 332, asparagine 374, and asparagine 415. A helical membrane pass occupies residues 435-455; sequence WWLGGLIVCFLLTLIVTFFFL. Over 456–487 the chain is Cytoplasmic; the sequence is GLLCGVFGYDKHATPTRRGCVSNTGGIFLMAG. Residues 488–508 traverse the membrane as a helical segment; it reads VGFGFLFCWILMILVVLTFVV. At 509–794 the chain is on the extracellular side; the sequence is GANVEKLLCE…LCGYVADPLN (286 aa). N-linked (GlcNAc...) asparagine glycosylation is found at asparagine 554, asparagine 581, and asparagine 732. The helical transmembrane segment at 795–815 threads the bilayer; that stretch reads LFWFGIGKATVLLLPAVIIAI. Residues 816-867 are Cytoplasmic-facing; that stretch reads KLAKYYRRMDSEDVYDDVETVPMKNLEIGSNGYHKDHLYGVHNPVMTSPSRY. A Phosphoserine modification is found at serine 865.

It belongs to the prominin family. As to quaternary structure, interacts with CDHR1 and with actin filaments. Interacts with NAT8 and NAT8B. In terms of processing, acetylation at Lys-226, Lys-258 and Lys-265 by NAT8 and NAT8B may control PROM1 protein expression and its function in cell apoptosis. As to expression, in the submandibular gland, expressed on the apical side of epithelial cells. In the parotid gland, expressed in the intercalated ducts. In the sublingual gland, expressed in intercalated ducts. In the extraorbital lacrimal gland, expressed in the intercalated tubules and larger intralobular ducts. Expressed in the retina. Present in urine within small membrane particles (at protein level). In the embryo, expressed on the apical side of neuroepithelial cells and of other epithelia such as lung buds, gut and ureter buds. In the adult, expressed at the apical side of the kidney tubules and of the ependymal layer of the brain. Not expressed in gut, liver, lung, pituitary, adrenal, heart or spleen. Localized to the nascent disk membranes at the base of the rod outer segment in the retina (at protein level).

It is found in the apical cell membrane. It localises to the cell projection. Its subcellular location is the microvillus membrane. The protein localises to the cilium. The protein resides in the photoreceptor outer segment. It is found in the endoplasmic reticulum. It localises to the endoplasmic reticulum-Golgi intermediate compartment. May play a role in cell differentiation, proliferation and apoptosis. Binds cholesterol in cholesterol-containing plasma membrane microdomains and may play a role in the organization of the apical plasma membrane in epithelial cells. During early retinal development acts as a key regulator of disk morphogenesis. Involved in regulation of MAPK and Akt signaling pathways. In neuroblastoma cells suppresses cell differentiation such as neurite outgrowth in a RET-dependent manner. This is Prominin-1 (Prom1) from Mus musculus (Mouse).